The chain runs to 102 residues: UPF0213 protein in potE 3'region (102 aa).

The GIY-YIG domain maps to 6 to 81; sequence SPWHLYMLRL…KQLSKTQKER (76 aa).

Belongs to the UPF0213 family.

In Serratia liquefaciens, this protein is UPF0213 protein in potE 3'region.